The sequence spans 265 residues: tRNA pseudouridine synthase A (265 aa).

Asp55 (nucleophile) is an active-site residue. Tyr113 contacts substrate.

This sequence belongs to the tRNA pseudouridine synthase TruA family. As to quaternary structure, homodimer.

It carries out the reaction uridine(38/39/40) in tRNA = pseudouridine(38/39/40) in tRNA. In terms of biological role, formation of pseudouridine at positions 38, 39 and 40 in the anticodon stem and loop of transfer RNAs. The chain is tRNA pseudouridine synthase A from Levilactobacillus brevis (strain ATCC 367 / BCRC 12310 / CIP 105137 / JCM 1170 / LMG 11437 / NCIMB 947 / NCTC 947) (Lactobacillus brevis).